Consider the following 189-residue polypeptide: UPF0398 protein LCK_00599 (189 aa).

It belongs to the UPF0398 family.

This chain is UPF0398 protein LCK_00599, found in Leuconostoc citreum (strain KM20).